A 304-amino-acid chain; its full sequence is Glutaminase (304 aa).

7 residues coordinate substrate: Ser-63, Asn-114, Glu-158, Asn-165, Tyr-189, Tyr-240, and Val-258.

The protein belongs to the glutaminase family. As to quaternary structure, homotetramer.

The enzyme catalyses L-glutamine + H2O = L-glutamate + NH4(+). The sequence is that of Glutaminase from Shewanella putrefaciens (strain CN-32 / ATCC BAA-453).